The chain runs to 550 residues: Amino acid transporter AVT1D (550 aa).

Positions Met-1 to Leu-16 are enriched in basic and acidic residues. A disordered region spans residues Met-1–Leu-99. A compositionally biased stretch (polar residues) spans Thr-84–Leu-99. 11 helical membrane-spanning segments follow: residues Ser-164–Ile-184, Trp-189–Met-209, Phe-236–Met-256, Leu-264–Ile-286, Ser-308–Val-328, Leu-345–Ile-365, Phe-375–Val-395, Val-424–Met-444, Gly-459–Val-479, Phe-481–Phe-501, and Leu-521–Ile-541.

This sequence belongs to the amino acid/polyamine transporter 2 family. Amino acid/auxin permease (AAAP) (TC 2.A.18.5) subfamily.

It is found in the membrane. This chain is Amino acid transporter AVT1D, found in Arabidopsis thaliana (Mouse-ear cress).